The chain runs to 216 residues: Probable nicotinate-nucleotide adenylyltransferase (216 aa).

It belongs to the NadD family.

The catalysed reaction is nicotinate beta-D-ribonucleotide + ATP + H(+) = deamido-NAD(+) + diphosphate. Its pathway is cofactor biosynthesis; NAD(+) biosynthesis; deamido-NAD(+) from nicotinate D-ribonucleotide: step 1/1. Functionally, catalyzes the reversible adenylation of nicotinate mononucleotide (NaMN) to nicotinic acid adenine dinucleotide (NaAD). The chain is Probable nicotinate-nucleotide adenylyltransferase from Marinobacter nauticus (strain ATCC 700491 / DSM 11845 / VT8) (Marinobacter aquaeolei).